Reading from the N-terminus, the 88-residue chain is CRISPR-associated endoribonuclease Cas2 3 (88 aa).

A Mg(2+)-binding site is contributed by aspartate 9.

The protein belongs to the CRISPR-associated endoribonuclease Cas2 protein family. Homodimer, forms a heterotetramer with a Cas1 homodimer. Mg(2+) serves as cofactor.

Functionally, CRISPR (clustered regularly interspaced short palindromic repeat), is an adaptive immune system that provides protection against mobile genetic elements (viruses, transposable elements and conjugative plasmids). CRISPR clusters contain sequences complementary to antecedent mobile elements and target invading nucleic acids. CRISPR clusters are transcribed and processed into CRISPR RNA (crRNA). Functions as a ssRNA-specific endoribonuclease. Involved in the integration of spacer DNA into the CRISPR cassette. This is CRISPR-associated endoribonuclease Cas2 3 from Thermodesulfovibrio yellowstonii (strain ATCC 51303 / DSM 11347 / YP87).